Reading from the N-terminus, the 500-residue chain is Protein ASPARTIC PROTEASE IN GUARD CELL 1 (500 aa).

An N-terminal signal peptide occupies residues 1-24 (MAFPRFLSLLAVVTLSLFLTTTDA). In terms of domain architecture, Peptidase A1 spans 162-496 (YFSRIGVGTP…DLSKNVIGLS (335 aa)). Residue Asp180 is part of the active site. Cystine bridges form between Cys190–Cys193, Cys196–Cys271, Cys217–Cys235, Cys222–Cys230, Cys307–Cys500, and Cys419–Cys461. Residue Asp379 is part of the active site.

The protein belongs to the peptidase A1 family. Expressed in young seedlings, leaves, guard-cells, stems, flowers and siliques, but not in roots or mesophyll cells.

It is found in the endoplasmic reticulum. Its activity is regulated as follows. Inhibited by pepstatin A. Aspartic protease involved in drought avoidance through abscisic acid signaling. This chain is Protein ASPARTIC PROTEASE IN GUARD CELL 1 (ASPG1), found in Arabidopsis thaliana (Mouse-ear cress).